A 248-amino-acid polypeptide reads, in one-letter code: Triosephosphate isomerase (248 aa).

Residue 11–13 (NWK) coordinates substrate. Catalysis depends on histidine 95, which acts as the Electrophile. The active-site Proton acceptor is the glutamate 167. Residues glycine 173, serine 212, and 233-234 (GG) each bind substrate.

It belongs to the triosephosphate isomerase family. In terms of assembly, homodimer.

It localises to the cytoplasm. It catalyses the reaction D-glyceraldehyde 3-phosphate = dihydroxyacetone phosphate. The protein operates within carbohydrate biosynthesis; gluconeogenesis. Its pathway is carbohydrate degradation; glycolysis; D-glyceraldehyde 3-phosphate from glycerone phosphate: step 1/1. Involved in the gluconeogenesis. Catalyzes stereospecifically the conversion of dihydroxyacetone phosphate (DHAP) to D-glyceraldehyde-3-phosphate (G3P). This is Triosephosphate isomerase from Ralstonia nicotianae (strain ATCC BAA-1114 / GMI1000) (Ralstonia solanacearum).